A 455-amino-acid polypeptide reads, in one-letter code: tRNA modification GTPase MnmE (455 aa).

Arg-24, Glu-81, and Lys-120 together coordinate (6S)-5-formyl-5,6,7,8-tetrahydrofolate. Residues 216–378 (GMTVVIAGRP…LREHLKACMG (163 aa)) form the TrmE-type G domain. K(+) is bound at residue Asn-226. Residues 226–231 (NAGKSS), 245–251 (TDIAGTT), 270–273 (DTAG), 335–338 (NKAD), and 359–361 (SAR) each bind GTP. Residue Ser-230 coordinates Mg(2+). Thr-245, Ile-247, and Thr-250 together coordinate K(+). Thr-251 is a binding site for Mg(2+). Lys-455 lines the (6S)-5-formyl-5,6,7,8-tetrahydrofolate pocket.

This sequence belongs to the TRAFAC class TrmE-Era-EngA-EngB-Septin-like GTPase superfamily. TrmE GTPase family. As to quaternary structure, homodimer. Heterotetramer of two MnmE and two MnmG subunits. K(+) serves as cofactor.

It localises to the cytoplasm. In terms of biological role, exhibits a very high intrinsic GTPase hydrolysis rate. Involved in the addition of a carboxymethylaminomethyl (cmnm) group at the wobble position (U34) of certain tRNAs, forming tRNA-cmnm(5)s(2)U34. The protein is tRNA modification GTPase MnmE of Pseudomonas paraeruginosa (strain DSM 24068 / PA7) (Pseudomonas aeruginosa (strain PA7)).